The chain runs to 390 residues: 23S rRNA (uracil(747)-C(5))-methyltransferase RlmC (390 aa).

Residues C12, C20, C23, and C100 each contribute to the [4Fe-4S] cluster site. Residues Q225, F254, E275, and N322 each coordinate S-adenosyl-L-methionine. Residue C349 is the Nucleophile of the active site.

Belongs to the class I-like SAM-binding methyltransferase superfamily. RNA M5U methyltransferase family. RlmC subfamily.

It carries out the reaction uridine(747) in 23S rRNA + S-adenosyl-L-methionine = 5-methyluridine(747) in 23S rRNA + S-adenosyl-L-homocysteine + H(+). Its function is as follows. Catalyzes the formation of 5-methyl-uridine at position 747 (m5U747) in 23S rRNA. This is 23S rRNA (uracil(747)-C(5))-methyltransferase RlmC from Shewanella baltica (strain OS155 / ATCC BAA-1091).